A 120-amino-acid chain; its full sequence is Urease subunit beta (120 aa).

Belongs to the urease beta subunit family. Heterotrimer of UreA (gamma), UreB (beta) and UreC (alpha) subunits. Three heterotrimers associate to form the active enzyme.

It localises to the cytoplasm. The enzyme catalyses urea + 2 H2O + H(+) = hydrogencarbonate + 2 NH4(+). It functions in the pathway nitrogen metabolism; urea degradation; CO(2) and NH(3) from urea (urease route): step 1/1. This is Urease subunit beta from Corynebacterium efficiens (strain DSM 44549 / YS-314 / AJ 12310 / JCM 11189 / NBRC 100395).